A 372-amino-acid chain; its full sequence is Flagellar P-ring protein (372 aa).

The first 26 residues, 1–26 (MNLSSLPHRLLAAAVALCAIAAPASA), serve as a signal peptide directing secretion.

Belongs to the FlgI family. As to quaternary structure, the basal body constitutes a major portion of the flagellar organelle and consists of four rings (L,P,S, and M) mounted on a central rod.

The protein resides in the periplasm. It is found in the bacterial flagellum basal body. In terms of biological role, assembles around the rod to form the L-ring and probably protects the motor/basal body from shearing forces during rotation. This chain is Flagellar P-ring protein, found in Xanthomonas campestris pv. campestris (strain ATCC 33913 / DSM 3586 / NCPPB 528 / LMG 568 / P 25).